A 63-amino-acid chain; its full sequence is Large ribosomal subunit protein bL35 (63 aa).

Residues 24–44 (RAKAYRSHRATGKTTKQKRQL) form a disordered region.

This sequence belongs to the bacterial ribosomal protein bL35 family.

This chain is Large ribosomal subunit protein bL35, found in Mycoplasma mycoides subsp. mycoides SC (strain CCUG 32753 / NCTC 10114 / PG1).